The following is a 243-amino-acid chain: Retrotransposon Gag-like protein 6 (243 aa).

Residues 1–12 (MVQPRTSKTESP) show a composition bias toward polar residues. The segment at 1–22 (MVQPRTSKTESPASAPGASAQM) is disordered. Positions 29 to 69 (LTSLRLTNSALRREASTLRAEKANLTNMLESVMAELTLLRT) form a coiled coil. Disordered stretches follow at residues 84–105 (SAITSNGTRPMTTPPTSLPEPF) and 218–243 (TGSCPVHPASNGTNPAPALPSRGRNL). Positions 85–94 (AITSNGTRPM) are enriched in polar residues.

The protein belongs to the LDOC1 family. In terms of tissue distribution, widely expressed.

The protein is Retrotransposon Gag-like protein 6 of Mus musculus (Mouse).